Consider the following 295-residue polypeptide: CRISPR system Cmr endoribonuclease Cmr4 (295 aa).

It belongs to the CRISPR system Cmr4 family. As to quaternary structure, forms oligomers in isolation. Part of the type III-B Cmr ribonucleoprotein (RNP) complex, an elongated RNP with Cmr2 and Cmr3 as the base, with Cmr4 and Cmr5 forming a helical core along the mature crRNA (39 or 45 nt in length), while the complex is capped by Cmr6 and Cmr1. The 5' end of the crRNA is bound to Cmr2 and Cmr3, while Cmr6 and a Cmr1 subunit (Cmr1-1 or Cmr1-2) cap the 3' end of the crRNA. The target RNA lies anti-parallel to the crRNA, with its 5' end near Cmr1 and Cmr6 and its 3' end near Cmr2 and Cmr3; major target RNA cleavage occurs nears the junction of Cmr1/Cmr6 and Cmr4/Cmr5, with minor cleavage occurring at 6 nt intervals which coincide with the proposed spacing of Cmr4 subunits. Interacts with Cmr5. Interacts with Cmr2, Cmr3, Cmr5 and Cmr6.

It is found in the cytoplasm. Functionally, CRISPR (clustered regularly interspaced short palindromic repeat), is an adaptive immune system that provides protection against mobile genetic elements (viruses, transposable elements and conjugative plasmids). CRISPR clusters contain sequences complementary to antecedent mobile elements and target invading nucleic acids. CRISPR clusters are transcribed and processed into CRISPR RNA (crRNA), formerly called psiRNA (prokaryotic silencing) in this organism. Part of the Cmr ribonucleoprotein complex which has divalent cation-dependent endoribonuclease activity specific for ssRNA complementary to the crRNA (target RNA), generating 5' hydroxy- and 3' phosphate or 2'-3' cyclic phosphate termini. This is probably the subunit that cleaves the target RNA. Cmr complex does not cleave ssDNA complementary to the crRNA. Cleavage of target RNA is guided by the crRNA; substrate cleavage occurs a fixed distance (14 nt) from the 3' end of the crRNA. In vitro reconstitution shows Cmr1-2 and Cmr5 are not absolutely necessary for target cleavage. This Pyrococcus furiosus (strain ATCC 43587 / DSM 3638 / JCM 8422 / Vc1) protein is CRISPR system Cmr endoribonuclease Cmr4.